Reading from the N-terminus, the 132-residue chain is uncharacterized protein (132 aa).

Lysine 59 participates in a covalent cross-link: Glycyl lysine isopeptide (Lys-Gly) (interchain with G-Cter in SAMP2).

It belongs to the OsmC/Ohr family.

This is an uncharacterized protein from Haloferax volcanii (strain ATCC 29605 / DSM 3757 / JCM 8879 / NBRC 14742 / NCIMB 2012 / VKM B-1768 / DS2) (Halobacterium volcanii).